The chain runs to 337 residues: Carbonic anhydrase 14 (337 aa).

The first 15 residues, 1-15, serve as a signal peptide directing secretion; the sequence is MLFSALLLEVIWILA. Residues 16–290 lie on the Extracellular side of the membrane; the sequence is ADGGQHWTYE…AGSSYTTGEM (275 aa). An Alpha-carbonic anhydrase domain is found at 20–278; sequence QHWTYEGPHG…LNQRMVFASF (259 aa). A disulfide bridge links C40 with C221. H84 (proton donor/acceptor) is an active-site residue. 3 residues coordinate Zn(2+): H109, H111, and H135. N213 is a glycosylation site (N-linked (GlcNAc...) asparagine). Residue 217 to 218 participates in substrate binding; sequence TT. Residues 291 to 311 form a helical membrane-spanning segment; sequence LSLGVGILVGCLCLLLAVYFI. The Cytoplasmic segment spans residues 312 to 337; sequence ARKIRKKRLENRKSVVFTSAQATTEA. S325 is modified (phosphoserine).

The protein belongs to the alpha-carbonic anhydrase family. It depends on Zn(2+) as a cofactor. High expression in all parts of the central nervous system and lower expression in adult liver, heart, small intestine, colon, kidney, urinary bladder and skeletal muscle.

Its subcellular location is the membrane. It catalyses the reaction hydrogencarbonate + H(+) = CO2 + H2O. Activated by histamine, L-adrenaline, L- and D-histidine, and L- and D-phenylalanine. Inhibited by coumarins, saccharin, sulfonamide derivatives such as acetazolamide (AZA) and Foscarnet (phosphonoformate trisodium salt). Functionally, reversible hydration of carbon dioxide. This Homo sapiens (Human) protein is Carbonic anhydrase 14 (CA14).